The following is a 336-amino-acid chain: MLHTTVTQLIGQTPVMSIDVPGRNATLVLKIEKNNPGGSMKDRMARSMVIAALQDGRLPPGGTIVESSSGNTGTGLALAALEFGLRFIAVVDHHAAPDKIRMMRALGAEIRYVEGDFREDEVAVVERQRLAAQLGAQLPGALFMNQSDNPANPEGYTGLVDELVAQLPDGIDAFVGCVGTGGSMTGISQRLKRNNPAVRTIAVEPAGSIVFGKPGHPYYQSGTGTPAGDEVGKVLDYGCIDEGVQVTDTQAFETARYIARRKGLLVGGSTGGAIYKALEFIGAGKLTGTVVTTVADGGEKYLGTIFDEEWMAKRRLLDPAIAAQLDGWLFGKARAA.

Lys-41 carries the post-translational modification N6-(pyridoxal phosphate)lysine. Residues Asn-71, 179 to 183 (GTGGS), and Ser-269 each bind pyridoxal 5'-phosphate.

It belongs to the cysteine synthase/cystathionine beta-synthase family. The cofactor is pyridoxal 5'-phosphate.

The catalysed reaction is O-acetyl-L-serine + hydrogen sulfide = L-cysteine + acetate. Functionally, as it is highly similar to bacterial and plant cysteine synthases, it is possible that it catalyzes a related reaction. The sequence is that of Putative cysteine synthase from Sinorhizobium fredii (strain NBRC 101917 / NGR234).